The chain runs to 339 residues: Ketol-acid reductoisomerase (NADP(+)) (339 aa).

The KARI N-terminal Rossmann domain occupies 1 to 182; sequence MRVYYDRDAD…GGGRAGIIET (182 aa). NADP(+) is bound by residues 24 to 27, R48, S51, and 83 to 86; these read YGSQ and DEGQ. H108 is a catalytic residue. G134 contacts NADP(+). A KARI C-terminal knotted domain is found at 183–328; it reads TFKEEVETDL…EKLRAMMPWI (146 aa). Residues D191, E195, E227, and E231 each coordinate Mg(2+). A substrate-binding site is contributed by S252.

The protein belongs to the ketol-acid reductoisomerase family. Requires Mg(2+) as cofactor.

The catalysed reaction is (2R)-2,3-dihydroxy-3-methylbutanoate + NADP(+) = (2S)-2-acetolactate + NADPH + H(+). It catalyses the reaction (2R,3R)-2,3-dihydroxy-3-methylpentanoate + NADP(+) = (S)-2-ethyl-2-hydroxy-3-oxobutanoate + NADPH + H(+). It functions in the pathway amino-acid biosynthesis; L-isoleucine biosynthesis; L-isoleucine from 2-oxobutanoate: step 2/4. It participates in amino-acid biosynthesis; L-valine biosynthesis; L-valine from pyruvate: step 2/4. Involved in the biosynthesis of branched-chain amino acids (BCAA). Catalyzes an alkyl-migration followed by a ketol-acid reduction of (S)-2-acetolactate (S2AL) to yield (R)-2,3-dihydroxy-isovalerate. In the isomerase reaction, S2AL is rearranged via a Mg-dependent methyl migration to produce 3-hydroxy-3-methyl-2-ketobutyrate (HMKB). In the reductase reaction, this 2-ketoacid undergoes a metal-dependent reduction by NADPH to yield (R)-2,3-dihydroxy-isovalerate. In Gluconobacter oxydans (strain 621H) (Gluconobacter suboxydans), this protein is Ketol-acid reductoisomerase (NADP(+)).